The following is a 135-amino-acid chain: Poly [ADP-ribose] polymerase 1 (135 aa).

A PARP alpha-helical domain is found at 1–21 (QAKVEMLDNLLDIEVAYSLLK). The PARP catalytic domain maps to 30–135 (DPIDINYEKL…APVTGYMFGK (106 aa)). NAD(+) contacts are provided by residues 104 to 106 (HGS), Gly-113, and Arg-120. Lys-135 is an active-site residue.

It belongs to the ARTD/PARP family. As to quaternary structure, homodimer; PARP-type zinc-fingers from separate parp1 molecules form a dimer module that specifically recognizes DNA strand breaks. Post-translationally, poly-ADP-ribosylated on serine, glutamate and aspartate residues by autocatalysis. Auto-ADP-ribosylation on serine takes place following interaction with HPF1. Auto poly-ADP-ribosylation on serine residues promotes its dissociation from chromatin.

Its subcellular location is the chromosome. The protein localises to the nucleus. It localises to the nucleolus. The protein resides in the cytoplasm. It is found in the cytosol. The catalysed reaction is NAD(+) + (ADP-D-ribosyl)n-acceptor = nicotinamide + (ADP-D-ribosyl)n+1-acceptor + H(+).. It carries out the reaction L-seryl-[protein] + NAD(+) = O-(ADP-D-ribosyl)-L-seryl-[protein] + nicotinamide + H(+). The enzyme catalyses L-aspartyl-[protein] + NAD(+) = 4-O-(ADP-D-ribosyl)-L-aspartyl-[protein] + nicotinamide. It catalyses the reaction L-glutamyl-[protein] + NAD(+) = 5-O-(ADP-D-ribosyl)-L-glutamyl-[protein] + nicotinamide. The catalysed reaction is L-tyrosyl-[protein] + NAD(+) = O-(ADP-D-ribosyl)-L-tyrosyl-[protein] + nicotinamide + H(+). It carries out the reaction L-histidyl-[protein] + NAD(+) = N(tele)-(ADP-D-ribosyl)-L-histidyl-[protein] + nicotinamide + H(+). ADP-ribosyltransferase activity is regulated via an allosteric activation mechanism. In absence of activation signal, parp1 is autoinhibited by the PARP alpha-helical domain (also named HD region), which prevents effective NAD(+)-binding. Activity is highly stimulated by signals, such as DNA strand breaks. Binding to damaged DNA unfolds the PARP alpha-helical domain, relieving autoinhibition. Poly-ADP-ribosyltransferase activity is tightly regulated and parp1 is removed from damaged chromatin following initial poly-ADP-ribosylation of chromatin to avoid prolonged residence (trapping) that has cytotoxic consequences. A number of factors or post-translational modifications (auto-poly-ADP-ribosylation) promote parp1 removal from chromatin. Functionally, poly-ADP-ribosyltransferase that mediates poly-ADP-ribosylation of proteins and plays a key role in DNA repair. Mediates glutamate, aspartate, serine, histidine or tyrosine ADP-ribosylation of proteins: the ADP-D-ribosyl group of NAD(+) is transferred to the acceptor carboxyl group of target residues and further ADP-ribosyl groups are transferred to the 2'-position of the terminal adenosine moiety, building up a polymer with an average chain length of 20-30 units. Serine ADP-ribosylation of proteins constitutes the primary form of ADP-ribosylation of proteins in response to DNA damage. Specificity for the different amino acids is conferred by interacting factors, such as hpf1 and nmnat1. Following interaction with hpf1, catalyzes serine ADP-ribosylation of target proteins; hpf1 confers serine specificity by completing the parp1 active site. Also catalyzes tyrosine ADP-ribosylation of target proteins following interaction with hpf1. Following interaction with nmnat1, catalyzes glutamate and aspartate ADP-ribosylation of target proteins; nmnat1 confers glutamate and aspartate specificity. Parp1 initiates the repair of DNA breaks: recognizes and binds DNA breaks within chromatin and recruits hpf1, licensing serine ADP-ribosylation of target proteins, such as histones (H2BS6ADPr and H3S10ADPr), thereby promoting decompaction of chromatin and the recruitment of repair factors leading to the reparation of DNA strand breaks. In addition to base excision repair (BER) pathway, also involved in double-strand breaks (DSBs) repair. Mediates the poly-ADP-ribosylation of a number of proteins. In addition to proteins, also able to ADP-ribosylate DNA: catalyzes ADP-ribosylation of DNA strand break termini containing terminal phosphates and a 2'-OH group in single- and double-stranded DNA, respectively. Parp1-mediated DNA repair in neurons plays a role in sleep: senses DNA damage in neurons and promotes sleep, facilitating efficient DNA repair. In addition to DNA repair, also involved in other processes, such as transcription regulation, programmed cell death, membrane repair, adipogenesis and innate immunity. Acts as a repressor of transcription: binds to nucleosomes and modulates chromatin structure in a manner similar to histone H1, thereby altering RNA polymerase II. Acts both as a positive and negative regulator of transcription elongation, depending on the context. Poly-ADP-ribose chains generated by parp1 also play a role in poly-ADP-ribose-dependent cell death, a process named parthanatos. Also acts as a negative regulator of the cGAS-STING pathway by mediating poly-ADP-ribosylation and inactivation of cgas. Acts as a negative regulator of adipogenesis by catalyzing poly ADP-ribosylation of histone H2B on 'Glu-35' (H2BE35ADPr). This Oncorhynchus masou (Cherry salmon) protein is Poly [ADP-ribose] polymerase 1 (parp1).